We begin with the raw amino-acid sequence, 316 residues long: D-alanine--D-alanine ligase (316 aa).

Residues 108–310 (ERYEELSVVK…FDELVDLIIK (203 aa)) form the ATP-grasp domain. ATP is bound at residue 138–193 (EEKIGLPCVVKPRKEGSSIGTHICFSKEELLDALKNEFKNYDEMIVQEYIKGKEIT). Mg(2+) contacts are provided by Asp265, Glu277, and Asn279.

The protein belongs to the D-alanine--D-alanine ligase family. Requires Mg(2+) as cofactor. It depends on Mn(2+) as a cofactor.

It is found in the cytoplasm. It catalyses the reaction 2 D-alanine + ATP = D-alanyl-D-alanine + ADP + phosphate + H(+). It functions in the pathway cell wall biogenesis; peptidoglycan biosynthesis. In terms of biological role, cell wall formation. The protein is D-alanine--D-alanine ligase of Fervidobacterium nodosum (strain ATCC 35602 / DSM 5306 / Rt17-B1).